The following is a 213-amino-acid chain: Kynurenine formamidase (213 aa).

Substrate is bound at residue Trp18. 3 residues coordinate Zn(2+): His48, His52, and Asp54. His58 functions as the Proton donor/acceptor in the catalytic mechanism. Residues His160 and Glu172 each contribute to the Zn(2+) site.

This sequence belongs to the Cyclase 1 superfamily. KynB family. As to quaternary structure, homodimer. Zn(2+) serves as cofactor.

It catalyses the reaction N-formyl-L-kynurenine + H2O = L-kynurenine + formate + H(+). The protein operates within amino-acid degradation; L-tryptophan degradation via kynurenine pathway; L-kynurenine from L-tryptophan: step 2/2. Its function is as follows. Catalyzes the hydrolysis of N-formyl-L-kynurenine to L-kynurenine, the second step in the kynurenine pathway of tryptophan degradation. This Burkholderia lata (strain ATCC 17760 / DSM 23089 / LMG 22485 / NCIMB 9086 / R18194 / 383) protein is Kynurenine formamidase.